Here is a 1166-residue protein sequence, read N- to C-terminus: Serine-aspartate repeat-containing protein E (1166 aa).

The N-terminal stretch at Met-1–Ala-52 is a signal peptide. The short motif at Phe-23 to Ser-34 is the YSIRK-G/S signaling motif element. Residues Ala-53 to Lys-606 are ligand binding A region. The tract at residues Glu-54–Glu-230 is disordered. The segment covering Ala-61–Val-75 has biased composition (basic and acidic residues). A compositionally biased stretch (low complexity) spans Glu-77–Asn-90. The span at Ile-92–Ser-108 shows a compositional bias: basic and acidic residues. Polar residues predominate over residues Asn-118 to Gln-129. Residues Asn-130–Thr-145 are compositionally biased toward basic and acidic residues. Residues Thr-166–Glu-178 show a composition bias toward low complexity. Positions Ile-179 to Thr-212 are enriched in polar residues. The span at Ser-221 to Glu-230 shows a compositional bias: basic and acidic residues. CNA-B domains lie at Leu-607–Pro-719, Lys-720–Pro-829, and Lys-830–Thr-940. The interval Val-904 to Asn-1141 is disordered. Acidic residues-rich tracts occupy residues Thr-908–Glu-918 and Tyr-935–Ser-1105. The short motif at Leu-1129–Gly-1133 is the LPXTG sorting signal element. Thr-1132 bears the Pentaglycyl murein peptidoglycan amidated threonine mark. Residues Gly-1133–Lys-1166 constitute a propeptide, removed by sortase.

This sequence belongs to the serine-aspartate repeat-containing protein (SDr) family. As to quaternary structure, interacts with host complement factor H/CFAH (via C-terminus). Interacts with host complement regulator C4BPA.

It localises to the secreted. The protein localises to the cell wall. Functionally, cell surface-associated calcium-binding protein which plays an important role in adhesion and pathogenesis. Contributes to the resistance to killing by innate immune components in blood and thus attenuates bacterial clearance by interacting with host complement factor H/CFAH and modulating its activity. Inhibits also bacterial opsonization and killing by interacting with host complement regulator C4BPA and thus inhibiting classical complement pathway activation. The protein is Serine-aspartate repeat-containing protein E (sdrE) of Staphylococcus aureus (strain Newman).